Reading from the N-terminus, the 49-residue chain is Large ribosomal subunit protein bL33C (49 aa).

The interval asparagine 20–lysine 49 is disordered. A compositionally biased stretch (basic and acidic residues) spans asparagine 25–lysine 49.

Belongs to the bacterial ribosomal protein bL33 family.

In Enterococcus faecalis (strain ATCC 700802 / V583), this protein is Large ribosomal subunit protein bL33C (rpmG3).